The following is a 456-amino-acid chain: Exodeoxyribonuclease 7 large subunit (456 aa).

The segment at 1-103 (MLPSQSPAIF…DYQIIVESMQ (103 aa)) is binds ssDNA, also required to bind the small subunit.

This sequence belongs to the XseA family. As to quaternary structure, heterooligomer composed of two different subunits with an approximate ratio of 4:1 for small to large subunit. Also estimated to have a 6:1 ration for small to large subunits. Requires Does not require a metal cofactor. as cofactor.

It localises to the cytoplasm. It carries out the reaction Exonucleolytic cleavage in either 5'- to 3'- or 3'- to 5'-direction to yield nucleoside 5'-phosphates.. Bidirectionally degrades single-stranded DNA into large acid-insoluble oligonucleotides, which are then degraded further into small acid-soluble oligonucleotides. It can degrade 3' or 5' ss regions extending from the termini of duplex DNA molecules and displaced ss regions. It can also excise thymine dimers in vitro. ssDNA-binding requires both subunits. Required for production of the mature 5'-end of retron Ec78 or Ec83 msDNA. Overproduction of this subunit in the absence of an equivalent quantity of the small subunit is toxic, causing cell elongation and chromosome fragmentation or loss; its toxicity is mostly suppressed by RecA. The protein is Exodeoxyribonuclease 7 large subunit of Escherichia coli (strain K12).